A 343-amino-acid chain; its full sequence is MESTPKKAPRSKFPALLVVALALVALVFVIWRVDSAPSTNDAYASADTIDVVPEVSGRIVELAVTDNQAVKQGDLLFRIDPRPYEANLAKAEASLAALDKQIMLTQRSVDAQQFGADSVNATVEKARAAAKQATDTLRRTEPLLKEGFVSAEDVDRARTAQRAAEADLNAVLLQAQSAASAVSGVDALVAQRAAVEADIALTKLHLEMTTVRAPFDGRIISLKTSVGQFASAMRPIFTLIDTRHWYVIANFRETDLKNIRSGTPATIRLMSDSGKTFEGKVDSIGYGVLPDDGGLVLGGLPKVSRSINWVRVAQRFPVKIMVDKPDPEMFRIGASAVANLEPQ.

The Cytoplasmic segment spans residues 1–12; that stretch reads MESTPKKAPRSK. A helical; Signal-anchor for type II membrane protein transmembrane segment spans residues 13-33; the sequence is FPALLVVALALVALVFVIWRV. Residues 34-343 lie on the Periplasmic side of the membrane; sequence DSAPSTNDAY…ASAVANLEPQ (310 aa).

It belongs to the membrane fusion protein (MFP) (TC 8.A.1) family. In terms of assembly, could be part of a tripartite efflux system composed of MdtN, MdtO and MdtP.

It localises to the cell inner membrane. Functionally, could be involved in resistance to puromycin, acriflavine and tetraphenylarsonium chloride. The polypeptide is Multidrug resistance protein MdtN (mdtN) (Shigella flexneri).